Reading from the N-terminus, the 79-residue chain is D-alanyl carrier protein (79 aa).

One can recognise a Carrier domain in the interval 1–77 (MDVKAEVIEI…KIVEGVTELR (77 aa)). An O-(pantetheine 4'-phosphoryl)serine modification is found at Ser-35.

This sequence belongs to the DltC family. In terms of processing, 4'-phosphopantetheine is transferred from CoA to a specific serine of apo-DCP.

It localises to the cytoplasm. It functions in the pathway cell wall biogenesis; lipoteichoic acid biosynthesis. Carrier protein involved in the D-alanylation of lipoteichoic acid (LTA). The loading of thioester-linked D-alanine onto DltC is catalyzed by D-alanine--D-alanyl carrier protein ligase DltA. The DltC-carried D-alanyl group is further transferred to cell membrane phosphatidylglycerol (PG) by forming an ester bond, probably catalyzed by DltD. D-alanylation of LTA plays an important role in modulating the properties of the cell wall in Gram-positive bacteria, influencing the net charge of the cell wall. This is D-alanyl carrier protein from Streptococcus thermophilus (strain CNRZ 1066).